Consider the following 108-residue polypeptide: Phosphoribosyl-ATP pyrophosphatase (108 aa).

It belongs to the PRA-PH family.

It localises to the cytoplasm. The enzyme catalyses 1-(5-phospho-beta-D-ribosyl)-ATP + H2O = 1-(5-phospho-beta-D-ribosyl)-5'-AMP + diphosphate + H(+). The protein operates within amino-acid biosynthesis; L-histidine biosynthesis; L-histidine from 5-phospho-alpha-D-ribose 1-diphosphate: step 2/9. This is Phosphoribosyl-ATP pyrophosphatase from Chromobacterium violaceum (strain ATCC 12472 / DSM 30191 / JCM 1249 / CCUG 213 / NBRC 12614 / NCIMB 9131 / NCTC 9757 / MK).